The sequence spans 647 residues: Phosphatidylinositol polyphosphate 5-phosphatase type IV (647 aa).

3 disordered regions span residues 1 to 80 (MPSK…QPPI), 101 to 131 (RGSQEDLTVQNGASPCRGSLQDSVAQSPAYS), and 177 to 196 (HRDAASGGPPSRLASLHASH). Repeat 1 spans residues 52–55 (PMPP). The 3 X 4 AA repeats of P-X-X-P stretch occupies residues 52 to 243 (PMPPFSIPAK…AHSNLGPSRP (192 aa)). Polar residues predominate over residues 60–75 (AKTSNQNPQTKANLIT). Repeat 2 spans residues 76–79 (PQPP). S103 carries the phosphoserine modification. Positions 120-129 (LQDSVAQSPA) are enriched in polar residues. Phosphothreonine is present on T197. Repeat 3 spans residues 240–243 (PSRP). A phosphoserine mark is found at S245 and S259. C644 is modified (cysteine methyl ester). Residue C644 is the site of S-farnesyl cysteine attachment. A propeptide spans 645–647 (TVS) (removed in mature form).

This sequence belongs to the inositol polyphosphate 5-phosphatase family. Interacts (when prenylated) with PDE6D; this is important for normal location in cilia. Highly expressed in testis, in pachytene and diplotene spermatocytes, but not in more mature elongating spermatids. Detected in neurons throughout the brain.

The protein localises to the cytoplasm. It localises to the cytoskeleton. It is found in the cilium axoneme. The protein resides in the golgi apparatus. Its subcellular location is the golgi stack membrane. The protein localises to the cell projection. It localises to the ruffle. It is found in the cell membrane. The protein resides in the nucleus. It catalyses the reaction a 1,2-diacyl-sn-glycero-3-phospho-(1D-myo-inositol-4,5-bisphosphate) + H2O = a 1,2-diacyl-sn-glycero-3-phospho-(1D-myo-inositol 4-phosphate) + phosphate. It carries out the reaction a 1,2-diacyl-sn-glycero-3-phospho-(1D-myo-inositol-3,4,5-trisphosphate) + H2O = a 1,2-diacyl-sn-glycero-3-phospho-(1D-myo-inositol-3,4-bisphosphate) + phosphate. The catalysed reaction is a 1,2-diacyl-sn-glycero-3-phospho-(1D-myo-inositol-3,5-bisphosphate) + H2O = a 1,2-diacyl-sn-glycero-3-phospho-(1D-myo-inositol-3-phosphate) + phosphate. Its function is as follows. Phosphatidylinositol (PtdIns) phosphatase that specifically hydrolyzes the 5-phosphate of phosphatidylinositol-3,4,5-trisphosphate (PtdIns(3,4,5)P3), phosphatidylinositol 4,5-bisphosphate (PtdIns(4,5)P2) and phosphatidylinositol 3,5-bisphosphate (PtdIns(3,5)P2). Specific for lipid substrates, inactive towards water soluble inositol phosphates. Specific for lipid substrates, inactive towards water soluble inositol phosphates. Plays an essential role in the primary cilium by controlling ciliary growth and phosphoinositide 3-kinase (PI3K) signaling and stability. This is Phosphatidylinositol polyphosphate 5-phosphatase type IV (Inpp5e) from Mus musculus (Mouse).